Reading from the N-terminus, the 339-residue chain is Lipoyl synthase (339 aa).

Residues Arg-13–Ile-35 form a disordered region. Residues Cys-68, Cys-73, Cys-79, Cys-94, Cys-98, Cys-101, and Ser-307 each contribute to the [4Fe-4S] cluster site. One can recognise a Radical SAM core domain in the interval Trp-80–Leu-296.

This sequence belongs to the radical SAM superfamily. Lipoyl synthase family. [4Fe-4S] cluster is required as a cofactor.

The protein localises to the cytoplasm. It catalyses the reaction [[Fe-S] cluster scaffold protein carrying a second [4Fe-4S](2+) cluster] + N(6)-octanoyl-L-lysyl-[protein] + 2 oxidized [2Fe-2S]-[ferredoxin] + 2 S-adenosyl-L-methionine + 4 H(+) = [[Fe-S] cluster scaffold protein] + N(6)-[(R)-dihydrolipoyl]-L-lysyl-[protein] + 4 Fe(3+) + 2 hydrogen sulfide + 2 5'-deoxyadenosine + 2 L-methionine + 2 reduced [2Fe-2S]-[ferredoxin]. The protein operates within protein modification; protein lipoylation via endogenous pathway; protein N(6)-(lipoyl)lysine from octanoyl-[acyl-carrier-protein]: step 2/2. Functionally, catalyzes the radical-mediated insertion of two sulfur atoms into the C-6 and C-8 positions of the octanoyl moiety bound to the lipoyl domains of lipoate-dependent enzymes, thereby converting the octanoylated domains into lipoylated derivatives. The protein is Lipoyl synthase of Methylorubrum extorquens (strain PA1) (Methylobacterium extorquens).